Here is a 572-residue protein sequence, read N- to C-terminus: Formate--tetrahydrofolate ligase (572 aa).

Thr81 to Thr88 contacts ATP.

The protein belongs to the formate--tetrahydrofolate ligase family.

It carries out the reaction (6S)-5,6,7,8-tetrahydrofolate + formate + ATP = (6R)-10-formyltetrahydrofolate + ADP + phosphate. It functions in the pathway one-carbon metabolism; tetrahydrofolate interconversion. In Granulibacter bethesdensis (strain ATCC BAA-1260 / CGDNIH1), this protein is Formate--tetrahydrofolate ligase.